Here is a 151-residue protein sequence, read N- to C-terminus: Small ribosomal subunit protein uS15 (151 aa).

Belongs to the universal ribosomal protein uS15 family. As to quaternary structure, component of the small ribosomal subunit. Mature ribosomes consist of a small (40S) and a large (60S) subunit. The 40S subunit contains about 32 different proteins and 1 molecule of RNA (18S). The 60S subunit contains 45 different proteins and 3 molecules of RNA (25S, 5.8S and 5S).

It is found in the cytoplasm. Component of the ribosome, a large ribonucleoprotein complex responsible for the synthesis of proteins in the cell. The small ribosomal subunit (SSU) binds messenger RNAs (mRNAs) and translates the encoded message by selecting cognate aminoacyl-transfer RNA (tRNA) molecules. The large subunit (LSU) contains the ribosomal catalytic site termed the peptidyl transferase center (PTC), which catalyzes the formation of peptide bonds, thereby polymerizing the amino acids delivered by tRNAs into a polypeptide chain. The nascent polypeptides leave the ribosome through a tunnel in the LSU and interact with protein factors that function in enzymatic processing, targeting, and the membrane insertion of nascent chains at the exit of the ribosomal tunnel. The protein is Small ribosomal subunit protein uS15 (RPS13) of Candida albicans (strain SC5314 / ATCC MYA-2876) (Yeast).